A 621-amino-acid polypeptide reads, in one-letter code: Threonine--tRNA ligase (621 aa).

The editing domain stretch occupies residues 1-137 (MRILQLHCDS…ESSKVVTKDS (137 aa)). The tract at residues 128–150 (ESSKVVTKDSTTKDDDEDTSDAL) is disordered. The interval 202–501 (PHVALMKKLA…SKKGKKPQLP (300 aa)) is catalytic. 3 residues coordinate Zn(2+): Cys-294, His-346, and His-470. A compositionally biased stretch (polar residues) spans 598–612 (QTSGKPYTGLNQSQH). Positions 598 to 621 (QTSGKPYTGLNQSQHLSKRPQLMV) are disordered.

It belongs to the class-II aminoacyl-tRNA synthetase family. Homodimer. Requires Zn(2+) as cofactor.

The protein localises to the cytoplasm. The enzyme catalyses tRNA(Thr) + L-threonine + ATP = L-threonyl-tRNA(Thr) + AMP + diphosphate + H(+). Catalyzes the attachment of threonine to tRNA(Thr) in a two-step reaction: L-threonine is first activated by ATP to form Thr-AMP and then transferred to the acceptor end of tRNA(Thr). Also edits incorrectly charged L-seryl-tRNA(Thr). The chain is Threonine--tRNA ligase from Nitrosopumilus maritimus (strain SCM1).